The chain runs to 91 residues: Small ribosomal subunit protein bS20 (91 aa).

Basic and acidic residues predominate over residues 1–21 (MPLHKSAEKRLRQSARRNERN). Disordered stretches follow at residues 1-25 (MPLH…RARK) and 70-91 (PNKA…MKAE). Positions 70–79 (PNKASRKKSQ) are enriched in basic residues.

It belongs to the bacterial ribosomal protein bS20 family.

Its function is as follows. Binds directly to 16S ribosomal RNA. The protein is Small ribosomal subunit protein bS20 of Chlorobium phaeobacteroides (strain BS1).